The chain runs to 141 residues: uncharacterized protein (141 aa).

It is found in the mitochondrion. This is an uncharacterized protein from Arabidopsis thaliana (Mouse-ear cress).